A 344-amino-acid polypeptide reads, in one-letter code: Uroporphyrinogen decarboxylase (344 aa).

Substrate contacts are provided by residues 26–30, F45, D75, Y151, S206, and H320; that span reads RQAGR.

It belongs to the uroporphyrinogen decarboxylase family. As to quaternary structure, homodimer.

Its subcellular location is the cytoplasm. It catalyses the reaction uroporphyrinogen III + 4 H(+) = coproporphyrinogen III + 4 CO2. It participates in porphyrin-containing compound metabolism; protoporphyrin-IX biosynthesis; coproporphyrinogen-III from 5-aminolevulinate: step 4/4. Its function is as follows. Catalyzes the decarboxylation of four acetate groups of uroporphyrinogen-III to yield coproporphyrinogen-III. This Staphylococcus saprophyticus subsp. saprophyticus (strain ATCC 15305 / DSM 20229 / NCIMB 8711 / NCTC 7292 / S-41) protein is Uroporphyrinogen decarboxylase.